Reading from the N-terminus, the 238-residue chain is Orotidine 5'-phosphate decarboxylase (238 aa).

Substrate-binding positions include Asp10, Lys32, 59–68, Thr122, Arg184, Gln193, Gly213, and Arg214; that span reads DLKLHDIPNT. Lys61 (proton donor) is an active-site residue.

This sequence belongs to the OMP decarboxylase family. Type 1 subfamily. As to quaternary structure, homodimer.

It catalyses the reaction orotidine 5'-phosphate + H(+) = UMP + CO2. It functions in the pathway pyrimidine metabolism; UMP biosynthesis via de novo pathway; UMP from orotate: step 2/2. Its function is as follows. Catalyzes the decarboxylation of orotidine 5'-monophosphate (OMP) to uridine 5'-monophosphate (UMP). This chain is Orotidine 5'-phosphate decarboxylase, found in Bacillus cytotoxicus (strain DSM 22905 / CIP 110041 / 391-98 / NVH 391-98).